A 514-amino-acid chain; its full sequence is Acetylcholine receptor subunit gamma (514 aa).

The first 22 residues, 1–22 (MRCSDLLLLFLLALCVLPGISC), serve as a signal peptide directing secretion. At 23-241 (RNQEEKLLQD…VIFYLIIQRK (219 aa)) the chain is on the extracellular side. The cysteines at positions 150 and 164 are disulfide-linked. N-linked (GlcNAc...) asparagine glycosylation is present at Asn163. A run of 3 helical transmembrane segments spans residues 242–266 (PLFY…VYFL), 275–293 (CTVS…FLIA), and 309–330 (YLTF…VLNV). The Cytoplasmic portion of the chain corresponds to 331 to 473 (SLRTPNTHSM…WILVGRVIDR (143 aa)). Tyr386 bears the Phosphotyrosine; by Tyr-kinases mark. A helical transmembrane segment spans residues 474-494 (VCFFIMASLFVCGTIGIFLMA).

Belongs to the ligand-gated ion channel (TC 1.A.9) family. Acetylcholine receptor (TC 1.A.9.1) subfamily. Gamma/CHRNG sub-subfamily. In terms of assembly, pentamer of two alpha chains, and one each of the beta, delta, and gamma chains.

Its subcellular location is the postsynaptic cell membrane. It localises to the cell membrane. The catalysed reaction is K(+)(in) = K(+)(out). It carries out the reaction Na(+)(in) = Na(+)(out). After binding acetylcholine, the AChR responds by an extensive change in conformation that affects all subunits and leads to opening of an ion-conducting channel across the plasma membrane. The protein is Acetylcholine receptor subunit gamma (CHRNG) of Gallus gallus (Chicken).